Here is a 115-residue protein sequence, read N- to C-terminus: UPF0597 protein NTHI1023 (115 aa).

Belongs to the UPF0597 family.

The sequence is that of UPF0597 protein NTHI1023 from Haemophilus influenzae (strain 86-028NP).